A 208-amino-acid polypeptide reads, in one-letter code: Bacitracin transport permease protein BCRB (208 aa).

The next 6 membrane-spanning stretches (helical) occupy residues 23-43, 70-90, 111-131, 135-155, 159-179, and 182-202; these read LYIVLLIGVPLYGVITSYLFN, VLLLIWIMMLTLIAWVLTLLF, FMIGGALLFFLVSPIIFVTLL, YVPTIIFTIIISMVSIMVYGT, ALFPWSAVWVIASGTFFPEYP, and YSFISVAATTVLGLAATIVYF.

The protein localises to the cell membrane. In terms of biological role, part of the binding-protein-dependent transport system for bacitracin that confer resistance to this antibiotic; probably responsible for the translocation of the substrate across the membrane. This Bacillus licheniformis protein is Bacitracin transport permease protein BCRB (bcrB).